A 391-amino-acid chain; its full sequence is 1-deoxy-D-xylulose 5-phosphate reductoisomerase (391 aa).

NADPH is bound by residues threonine 17, glycine 18, serine 19, isoleucine 20, asparagine 47, and asparagine 130. A 1-deoxy-D-xylulose 5-phosphate-binding site is contributed by lysine 131. Glutamate 132 contributes to the NADPH binding site. Mn(2+) is bound at residue aspartate 156. 1-deoxy-D-xylulose 5-phosphate contacts are provided by serine 157, glutamate 158, serine 182, and histidine 205. Glutamate 158 contacts Mn(2+). Glycine 211 provides a ligand contact to NADPH. 1-deoxy-D-xylulose 5-phosphate-binding residues include serine 218, asparagine 223, lysine 224, and glutamate 227. Glutamate 227 is a Mn(2+) binding site.

Belongs to the DXR family. The cofactor is Mg(2+). Mn(2+) is required as a cofactor.

The catalysed reaction is 2-C-methyl-D-erythritol 4-phosphate + NADP(+) = 1-deoxy-D-xylulose 5-phosphate + NADPH + H(+). It participates in isoprenoid biosynthesis; isopentenyl diphosphate biosynthesis via DXP pathway; isopentenyl diphosphate from 1-deoxy-D-xylulose 5-phosphate: step 1/6. Functionally, catalyzes the NADPH-dependent rearrangement and reduction of 1-deoxy-D-xylulose-5-phosphate (DXP) to 2-C-methyl-D-erythritol 4-phosphate (MEP). The protein is 1-deoxy-D-xylulose 5-phosphate reductoisomerase of Sinorhizobium medicae (strain WSM419) (Ensifer medicae).